The sequence spans 447 residues: Probable asparagine--tRNA ligase, cytoplasmic (447 aa).

It belongs to the class-II aminoacyl-tRNA synthetase family.

It localises to the cytoplasm. The enzyme catalyses tRNA(Asn) + L-asparagine + ATP = L-asparaginyl-tRNA(Asn) + AMP + diphosphate + H(+). The protein is Probable asparagine--tRNA ligase, cytoplasmic of Vairimorpha ceranae (strain BRL01) (Microsporidian parasite).